The following is an 801-amino-acid chain: Cadherin-20 (801 aa).

An N-terminal signal peptide occupies residues 1-34 (MWTTGRMSNAKSWLGLGTSLYFWALMDLATTVLS). Residues 35-59 (STPMPEVELDTLFSGKPQSHQRSRR) constitute a propeptide that is removed on maturation. Over 60–619 (SWVWNQFFVL…AYMLPVSLSR (560 aa)) the chain is Extracellular. Cadherin domains lie at 61–165 (WVWN…EPKF), 166–274 (LDGP…PPRF), 275–389 (PQKH…PPVF), 390–494 (EPRF…APEF), and 494–610 (FPRF…SPEA). The N-linked (GlcNAc...) asparagine glycan is linked to N261. Residues N420, N461, and N542 are each glycosylated (N-linked (GlcNAc...) asparagine). Residues 620-640 (GALIAILACVFVLLVLVLLIL) form a helical membrane-spanning segment. At 641 to 801 (SMRRHRKQPY…GASEGPSPLW (161 aa)) the chain is on the cytoplasmic side.

The protein resides in the cell membrane. Cadherins are calcium-dependent cell adhesion proteins. They preferentially interact with themselves in a homophilic manner in connecting cells; cadherins may thus contribute to the sorting of heterogeneous cell types. This Rattus norvegicus (Rat) protein is Cadherin-20 (Cdh20).